We begin with the raw amino-acid sequence, 661 residues long: MCFVLLLRRGFRLFGTECGSKTTKWDPVQSLQLNHQSLVLLENCNSRNQFKQVLAQIMRFNLICDTFPMSRLIFFSAITYPENLDLAKLLFLNFTPNPNVFVYNTMISAVSSSKNECFGLYSSMIRHRVSPDRQTFLYLMKASSFLSEVKQIHCHIIVSGCLSLGNYLWNSLVKFYMELGNFGVAEKVFARMPHPDVSSFNVMIVGYAKQGFSLEALKLYFKMVSDGIEPDEYTVLSLLVCCGHLSDIRLGKGVHGWIERRGPVYSSNLILSNALLDMYFKCKESGLAKRAFDAMKKKDMRSWNTMVVGFVRLGDMEAAQAVFDQMPKRDLVSWNSLLFGYSKKGCDQRTVRELFYEMTIVEKVKPDRVTMVSLISGAANNGELSHGRWVHGLVIRLQLKGDAFLSSALIDMYCKCGIIERAFMVFKTATEKDVALWTSMITGLAFHGNGQQALQLFGRMQEEGVTPNNVTLLAVLTACSHSGLVEEGLHVFNHMKDKFGFDPETEHYGSLVDLLCRAGRVEEAKDIVQKKMPMRPSQSMWGSILSACRGGEDIETAELALTELLKLEPEKEGGYVLLSNIYATVGRWGYSDKTREAMENRGVKKTAGYSSVVGVEGLHRFVAAEKQNHPRWTEIKRILQHLYNEMKPKLDCLDLLEIEIK.

A mitochondrion-targeting transit peptide spans 1-18; that stretch reads MCFVLLLRRGFRLFGTEC. PPR repeat units follow at residues 99–131, 132–163, 165–195, 196–230, 231–265, 268–298, 299–333, 334–366, 367–401, 402–432, 433–467, 468–498, and 504–539; these read NVFV…RVSP, DRQT…GCLS, GNYL…MPHP, DVSS…GIEP, DEYT…GPVY, NLIL…MKKK, DMRS…DLVS, WNSL…KVKP, DRVT…QLKG, DAFL…ATEK, DVAL…GVTP, NNVT…MKDK, and ETEH…PSQS. A type E motif region spans residues 540–615; it reads MWGSILSACR…TAGYSSVVGV (76 aa). The interval 616–647 is type E(+) motif; that stretch reads EGLHRFVAAEKQNHPRWTEIKRILQHLYNEMK.

Belongs to the PPR family. PCMP-E subfamily.

The protein localises to the mitochondrion. This chain is Pentatricopeptide repeat-containing protein At3g04750, mitochondrial (PCMP-E81), found in Arabidopsis thaliana (Mouse-ear cress).